The primary structure comprises 85 residues: Small ribosomal subunit protein uS17 (85 aa).

This sequence belongs to the universal ribosomal protein uS17 family. As to quaternary structure, part of the 30S ribosomal subunit.

Functionally, one of the primary rRNA binding proteins, it binds specifically to the 5'-end of 16S ribosomal RNA. The protein is Small ribosomal subunit protein uS17 of Actinobacillus succinogenes (strain ATCC 55618 / DSM 22257 / CCUG 43843 / 130Z).